Consider the following 602-residue polypeptide: Translation initiation factor IF-2 (602 aa).

The tr-type G domain occupies 112–281 (KRAPIITIMG…LLLCEVLDLK (170 aa)). Positions 121-128 (GHVDHGKT) are G1. 121–128 (GHVDHGKT) lines the GTP pocket. Positions 146-150 (GITQH) are G2. Positions 167–170 (DTPG) are G3. Residues 167–171 (DTPGH) and 221–224 (NKMD) each bind GTP. A G4 region spans residues 221 to 224 (NKMD). Residues 257 to 259 (SAL) form a G5 region.

Belongs to the TRAFAC class translation factor GTPase superfamily. Classic translation factor GTPase family. IF-2 subfamily.

The protein resides in the cytoplasm. Functionally, one of the essential components for the initiation of protein synthesis. Protects formylmethionyl-tRNA from spontaneous hydrolysis and promotes its binding to the 30S ribosomal subunits. Also involved in the hydrolysis of GTP during the formation of the 70S ribosomal complex. The chain is Translation initiation factor IF-2 from Mycoplasmopsis synoviae (strain 53) (Mycoplasma synoviae).